We begin with the raw amino-acid sequence, 428 residues long: Serine--tRNA ligase (428 aa).

Thr231–Glu233 contacts L-serine. Residue Arg262–Glu264 coordinates ATP. Glu285 contacts L-serine. Glu349–Ser352 is a binding site for ATP. Ser385 lines the L-serine pocket.

The protein belongs to the class-II aminoacyl-tRNA synthetase family. Type-1 seryl-tRNA synthetase subfamily. In terms of assembly, homodimer. The tRNA molecule binds across the dimer.

It localises to the cytoplasm. The catalysed reaction is tRNA(Ser) + L-serine + ATP = L-seryl-tRNA(Ser) + AMP + diphosphate + H(+). It catalyses the reaction tRNA(Sec) + L-serine + ATP = L-seryl-tRNA(Sec) + AMP + diphosphate + H(+). The protein operates within aminoacyl-tRNA biosynthesis; selenocysteinyl-tRNA(Sec) biosynthesis; L-seryl-tRNA(Sec) from L-serine and tRNA(Sec): step 1/1. Functionally, catalyzes the attachment of serine to tRNA(Ser). Is also able to aminoacylate tRNA(Sec) with serine, to form the misacylated tRNA L-seryl-tRNA(Sec), which will be further converted into selenocysteinyl-tRNA(Sec). This Staphylococcus aureus (strain bovine RF122 / ET3-1) protein is Serine--tRNA ligase.